We begin with the raw amino-acid sequence, 579 residues long: Probable receptor-like serine/threonine-protein kinase At5g57670 (579 aa).

At Thr-256 the chain carries Phosphothreonine. Residues 267–542 (FHQGNIVGIG…LLTNGNEAEI (276 aa)) form the Protein kinase domain. ATP contacts are provided by residues 273–281 (VGIGGYSEV) and Lys-295. Asp-392 (proton acceptor) is an active-site residue. Position 396 is a phosphoserine (Ser-396). Thr-432 is subject to Phosphothreonine.

It belongs to the protein kinase superfamily. Ser/Thr protein kinase family.

The catalysed reaction is L-seryl-[protein] + ATP = O-phospho-L-seryl-[protein] + ADP + H(+). It catalyses the reaction L-threonyl-[protein] + ATP = O-phospho-L-threonyl-[protein] + ADP + H(+). The sequence is that of Probable receptor-like serine/threonine-protein kinase At5g57670 from Arabidopsis thaliana (Mouse-ear cress).